Here is a 246-residue protein sequence, read N- to C-terminus: Predicted GPI-anchored protein 33 (246 aa).

The first 16 residues, M1–A16, serve as a signal peptide directing secretion. N214 carries N-linked (GlcNAc...) asparagine glycosylation. N219 carries GPI-anchor amidated asparagine lipidation. Residues A220–I246 constitute a propeptide, removed in mature form.

Its subcellular location is the cell membrane. The chain is Predicted GPI-anchored protein 33 (PGA33) from Candida albicans (strain SC5314 / ATCC MYA-2876) (Yeast).